The chain runs to 218 residues: Large ribosomal subunit protein uL4 (218 aa).

Positions 46–102 (ARQGTHSTKTRGEVRGGGRKPFRQKGTGRARQGSIRAPHFTGGGISHGPKPRDYSQR) are disordered. A compositionally biased stretch (basic residues) spans 62-73 (GGRKPFRQKGTG).

It belongs to the universal ribosomal protein uL4 family. In terms of assembly, part of the 50S ribosomal subunit.

In terms of biological role, one of the primary rRNA binding proteins, this protein initially binds near the 5'-end of the 23S rRNA. It is important during the early stages of 50S assembly. It makes multiple contacts with different domains of the 23S rRNA in the assembled 50S subunit and ribosome. Functionally, forms part of the polypeptide exit tunnel. This Corynebacterium glutamicum (strain R) protein is Large ribosomal subunit protein uL4.